Consider the following 388-residue polypeptide: UDP-N-acetylglucosamine--N-acetylmuramyl-(pentapeptide) pyrophosphoryl-undecaprenol N-acetylglucosamine transferase (388 aa).

Residues 15 to 17 (TGG), asparagine 125, arginine 168, serine 196, and glutamine 297 each bind UDP-N-acetyl-alpha-D-glucosamine.

It belongs to the glycosyltransferase 28 family. MurG subfamily.

Its subcellular location is the cell inner membrane. It catalyses the reaction di-trans,octa-cis-undecaprenyl diphospho-N-acetyl-alpha-D-muramoyl-L-alanyl-D-glutamyl-meso-2,6-diaminopimeloyl-D-alanyl-D-alanine + UDP-N-acetyl-alpha-D-glucosamine = di-trans,octa-cis-undecaprenyl diphospho-[N-acetyl-alpha-D-glucosaminyl-(1-&gt;4)]-N-acetyl-alpha-D-muramoyl-L-alanyl-D-glutamyl-meso-2,6-diaminopimeloyl-D-alanyl-D-alanine + UDP + H(+). It functions in the pathway cell wall biogenesis; peptidoglycan biosynthesis. Functionally, cell wall formation. Catalyzes the transfer of a GlcNAc subunit on undecaprenyl-pyrophosphoryl-MurNAc-pentapeptide (lipid intermediate I) to form undecaprenyl-pyrophosphoryl-MurNAc-(pentapeptide)GlcNAc (lipid intermediate II). The polypeptide is UDP-N-acetylglucosamine--N-acetylmuramyl-(pentapeptide) pyrophosphoryl-undecaprenol N-acetylglucosamine transferase (Novosphingobium aromaticivorans (strain ATCC 700278 / DSM 12444 / CCUG 56034 / CIP 105152 / NBRC 16084 / F199)).